Here is a 528-residue protein sequence, read N- to C-terminus: GMP synthase [glutamine-hydrolyzing] (528 aa).

The Glutamine amidotransferase type-1 domain maps to 13 to 204 (AIVILDFGSQ…VYHICGCEPD (192 aa)). C90 serves as the catalytic Nucleophile. Active-site residues include H178 and E180. The region spanning 205 to 403 (WTTTAFIEEA…LGLPEEIVRR (199 aa)) is the GMPS ATP-PPase domain. 232–238 (SGGVDSS) lines the ATP pocket.

In terms of assembly, homodimer.

It catalyses the reaction XMP + L-glutamine + ATP + H2O = GMP + L-glutamate + AMP + diphosphate + 2 H(+). The protein operates within purine metabolism; GMP biosynthesis; GMP from XMP (L-Gln route): step 1/1. Catalyzes the synthesis of GMP from XMP. In Prochlorococcus marinus (strain MIT 9303), this protein is GMP synthase [glutamine-hydrolyzing].